Consider the following 458-residue polypeptide: Serine/threonine-protein kinase tricornered (458 aa).

One can recognise a Protein kinase domain in the interval Phe-92–Phe-389. ATP is bound by residues Ile-98–Val-106 and Lys-121. Residues Tyr-118–Thr-179 are interaction with mats and Mob1. The Proton acceptor role is filled by Asp-215. Residue Ser-287 is modified to Phosphoserine. Residues Arg-390–Glu-458 enclose the AGC-kinase C-terminal domain. Thr-448 is subject to Phosphothreonine.

Belongs to the protein kinase superfamily. AGC Ser/Thr protein kinase family. In terms of assembly, interacts with, and is activated by, Mob1. Requires Mg(2+) as cofactor.

The protein resides in the cytoplasm. Its subcellular location is the nucleus. It catalyses the reaction L-seryl-[protein] + ATP = O-phospho-L-seryl-[protein] + ADP + H(+). The enzyme catalyses L-threonyl-[protein] + ATP = O-phospho-L-threonyl-[protein] + ADP + H(+). Functionally, serine/threonine-protein kinase involved in controlling cell structure and proliferation of a variety of polarized outgrowths including epidermal hairs, bristles, arista laterals, and dendrites. Together with fry, maintains the integrity of epidermal hairs and is an essential component of the signaling pathway regulating dendritic branching of sensory neurons. Reduces neurite outgrowth by phosphorylating pav/pavarotti, thereby inhibiting its function in microtubule-microtubule sliding. The sequence is that of Serine/threonine-protein kinase tricornered from Drosophila pseudoobscura pseudoobscura (Fruit fly).